Consider the following 504-residue polypeptide: Transcriptional coactivator YAP1 (504 aa).

2 stretches are compositionally biased toward pro residues: residues 1 to 12 and 20 to 36; these read MDPGQQPPPQPA and PSQPPQGQGPPSGPGQP. The tract at residues 1–59 is disordered; the sequence is MDPGQQPPPQPAPQGQGQPPSQPPQGQGPPSGPGQPAPAATQAAPQAPPAGHQIVHVRG. Over residues 37-51 the composition is skewed to low complexity; it reads APAATQAAPQAPPAG. Serine 61 is subject to Phosphoserine; by LATS1 and LATS2. Threonine 63 carries the post-translational modification Phosphothreonine. The stretch at 86–100 forms a coiled coil; it reads MRLRKLPDSFFKPPE. Position 90 is an N6-lactoyllysine (lysine 90). The tract at residues 91–114 is disordered; it reads LPDSFFKPPEPKSHSRQASTDAGT. Serine 105 bears the Phosphoserine mark. The residue at position 109 (serine 109) is a Phosphoserine; by LATS1 and LATS2. Residue threonine 110 is modified to Phosphothreonine. Threonine 119 carries the phosphothreonine; by MAPK8 and MAPK9 modification. Serine 127 is subject to Phosphoserine; by LATS1 and LATS2. 2 positions are modified to phosphoserine: serine 128 and serine 131. The segment at 133-158 is disordered; that stretch reads QLGAVSPGTLTPTGVVSGPAATPTAQ. The residue at position 138 (serine 138) is a Phosphoserine; by MAPK8 and MAPK9. Threonine 154 is subject to Phosphothreonine; by MAPK8 and MAPK9. Phosphoserine; by LATS1 and LATS2 is present on serine 164. 2 WW domains span residues 171-204 and 230-263; these read VPLPAGWEMAKTSSGQRYFLNHIDQTTTWQDPRK and GPLPDGWEQAMTQDGEIYYINHKNKTTSWLDPRL. Residues serine 274 and serine 289 each carry the phosphoserine modification. 2 disordered regions span residues 275 to 309 and 355 to 407; these read QSAPVKQPPPLAPQSPQGGVMGGSNSNQQQQMRLQ and LEQD…MSSY. A transactivation domain region spans residues 291-504; sequence QGGVMGGSNS…LDKESFLTWL (214 aa). The stretch at 298-359 forms a coiled coil; sequence SNSNQQQQMR…SQLPTLEQDG (62 aa). Residues 355-391 are compositionally biased toward polar residues; that stretch reads LEQDGGTQNPVSSPGMSQELRTMTTNSSDPFLNSGTY. At serine 367 the chain carries Phosphoserine; by MAPK8 and MAPK9. A phosphoserine mark is found at serine 371, serine 381, serine 382, and serine 388. Serine 397 is subject to Phosphoserine; by LATS1 and LATS2. Serine 400 and serine 403 each carry phosphoserine; by CK1. Tyrosine 407 is subject to Phosphotyrosine; by ABL1. Threonine 412 is modified (phosphothreonine; by MAPK8 and MAPK9).

Belongs to the YAP1 family. Part of a complex when phosphorylated that contains DSG3, PKP1, YAP1 and YWHAG; the complex is required for localization of DSG3 and YAP1 to the cell membrane in keratinocytes. Binds to the SH3 domain of the YES kinase. Binds to WBP1 and WBP2. Binds, in vitro, through the WW1 domain, to neural isoforms of ENAH that contain the PPSY motif. The phosphorylated form interacts with YWHAB. Interacts (via WW domains) with LATS1 (via PPxY motif 2). Interacts with LATS2. Interacts with TEAD1, TEAD2, TEAD3 and TEAD4. Interacts with TP73. Interacts with RUNX1. Interacts with HCK. Interacts (via WW domains) with PTPN14 (via PPxY motif 2); this interaction leads to the cytoplasmic sequestration of YAP1 and inhibits its transcriptional coactivator activity. Interacts (when phosphorylated at Ser-127) with SMAD2, SMAD3 and WWTR1. Interacts with PRRG2 (via cytoplasmic domain). Interacts (via WW domains) with PRRG4 (via cytoplasmic domain). Interacts (phosphorylated) with CLDN18; the interaction sequesters YAP1 away from the nucleus and thereby restricts transcription of YAP1 target genes. Interacts with SMAD1. Interacts with AMOTL2, the interaction is required for ubiquitination of AMOTL2 and localization of YAP1 to tight junctions. Interacts with AMOT isoform 1; the interaction facilitates translocation of YAP1 to the cytoplasm and tight junctions. In terms of assembly, interacts (via WW domain 1) with isoform 3 of ERBB4 (via PPxY motif 2). Phosphorylated by LATS1 and LATS2; leading to cytoplasmic translocation and inactivation. Phosphorylated by ABL1; leading to YAP1 stabilization, enhanced interaction with TP73 and recruitment onto proapoptotic genes; in response to DNA damage. Phosphorylation at Ser-400 and Ser-403 by CK1 is triggered by previous phosphorylation at Ser-397 by LATS proteins and leads to YAP1 ubiquitination by SCF(beta-TRCP) E3 ubiquitin ligase and subsequent degradation. Phosphorylated at Thr-119, Ser-138, Thr-154, Ser-367 and Thr-412 by MAPK8/JNK1 and MAPK9/JNK2, which is required for the regulation of apoptosis by YAP1. Phosphorylated in the nucleus by PRP4K; phosphorylation leads to nuclear exclusion. In terms of processing, lactylation by AARS1 promotes nuclear localization and stabilization of YAP1, leading to increased Hippo signaling pathway. Delactylated by SIRT1. Post-translationally, ubiquitinated by SCF(beta-TRCP) E3 ubiquitin ligase. As to expression, increased expression seen in some liver and prostate cancers. Isoforms lacking the transactivation domain found in striatal neurons of patients with Huntington disease (at protein level).

It localises to the cytoplasm. The protein localises to the nucleus. Its subcellular location is the cell junction. It is found in the tight junction. The protein resides in the cell membrane. Transcriptional regulator with dual roles as a coactivator and corepressor. Critical downstream regulatory target in the Hippo signaling pathway, crucial for organ size control and tumor suppression by restricting proliferation and promoting apoptosis. The Hippo signaling pathway core involves a kinase cascade featuring STK3/MST2 and STK4/MST1, along with its regulatory partner SAV1, which phosphorylates and activates LATS1/2 in complex with their regulatory protein, MOB1. This activation leads to the phosphorylation and inactivation of the YAP1 oncoprotein and WWTR1/TAZ. Phosphorylation of YAP1 by LATS1/2 prevents its nuclear translocation, thereby regulating the expression of its target genes. The transcriptional regulation of gene expression requires TEAD transcription factors and modulates cell growth, anchorage-independent growth, and induction of epithelial-mesenchymal transition (EMT). Plays a key role in tissue tension and 3D tissue shape by regulating the cortical actomyosin network, acting via ARHGAP18, a Rho GTPase activating protein that suppresses F-actin polymerization. It also suppresses ciliogenesis by acting as a transcriptional corepressor of TEAD4 target genes AURKA and PLK1. In conjunction with WWTR1, regulates TGFB1-dependent SMAD2 and SMAD3 nuclear accumulation. Synergizes with WBP2 to enhance PGR activity. Functionally, activates the C-terminal fragment (CTF) of ERBB4 (isoform 3). This is Transcriptional coactivator YAP1 from Homo sapiens (Human).